A 243-amino-acid polypeptide reads, in one-letter code: Type III pantothenate kinase (243 aa).

6 to 13 (DIGNTNLK) serves as a coordination point for ATP. 101–104 (GSDI) contacts substrate. Catalysis depends on Asp103, which acts as the Proton acceptor. Thr125 serves as a coordination point for ATP. Thr176 contacts substrate.

This sequence belongs to the type III pantothenate kinase family. In terms of assembly, homodimer. NH4(+) serves as cofactor. The cofactor is K(+).

It localises to the cytoplasm. It carries out the reaction (R)-pantothenate + ATP = (R)-4'-phosphopantothenate + ADP + H(+). It functions in the pathway cofactor biosynthesis; coenzyme A biosynthesis; CoA from (R)-pantothenate: step 1/5. Functionally, catalyzes the phosphorylation of pantothenate (Pan), the first step in CoA biosynthesis. This Mycoplasma mobile (strain ATCC 43663 / 163K / NCTC 11711) (Mesomycoplasma mobile) protein is Type III pantothenate kinase.